The following is a 436-amino-acid chain: CaM kinase-like vesicle-associated protein (436 aa).

In terms of domain architecture, Protein kinase spans 24-286 (YDLGQIVKSE…AQEAINHEWI (263 aa)). The segment at 328–436 (APENQTAAAT…ALDTVEEQSG (109 aa)) is disordered. A compositionally biased stretch (low complexity) spans 333-409 (TAAATAPAAE…QPPAEPVVHV (77 aa)).

This sequence belongs to the protein kinase superfamily. CAMK Ser/Thr protein kinase family. In terms of assembly, interacts with calmodulin, in the presence of calcium. Ca(2+) serves as cofactor.

It localises to the cytoplasmic vesicle membrane. In terms of biological role, does not appear to have detectable kinase activity. The chain is CaM kinase-like vesicle-associated protein (camkv) from Danio rerio (Zebrafish).